Here is a 233-residue protein sequence, read N- to C-terminus: MYKRVLLKLSGEVLSGEGEKGFNHENIIYLVDELKKILEYGTNVGIVIGAGNLFRGREMQELSPTIADQIGMLGTVINALYLKDIFEKNNLRTVVVSQVSSLPSIRPIHYDDINLYFDAGYLVIFAGGTSNPFFTTDTAAALRAVEMKADILIKGTKVDGIYDKDPKKFTDARKFDTLTYDEAIDKGLKIMDTEAFSICKRYDMKILVMDFFKESNLLSAVREENVGTLVVPK.

ATP-binding positions include 8–11 (KLSG), G51, and R55. UMP-binding positions include D68 and 129 to 136 (TSNPFFTT). Residues T156, Y162, and D165 each coordinate ATP.

The protein belongs to the UMP kinase family. As to quaternary structure, homohexamer.

It localises to the cytoplasm. It catalyses the reaction UMP + ATP = UDP + ADP. Its pathway is pyrimidine metabolism; CTP biosynthesis via de novo pathway; UDP from UMP (UMPK route): step 1/1. Inhibited by UTP. Catalyzes the reversible phosphorylation of UMP to UDP. This Thermosipho melanesiensis (strain DSM 12029 / CIP 104789 / BI429) protein is Uridylate kinase.